We begin with the raw amino-acid sequence, 145 residues long: Large ribosomal subunit protein uL24 (145 aa).

Positions E108–Q145 are disordered. Basic and acidic residues predominate over residues E113 to Q145.

This sequence belongs to the universal ribosomal protein uL24 family. In terms of assembly, part of the 50S ribosomal subunit.

Functionally, one of two assembly initiator proteins, it binds directly to the 5'-end of the 23S rRNA, where it nucleates assembly of the 50S subunit. Its function is as follows. Located at the polypeptide exit tunnel on the outside of the subunit. The protein is Large ribosomal subunit protein uL24 (rpl24) of Thermoplasma volcanium (strain ATCC 51530 / DSM 4299 / JCM 9571 / NBRC 15438 / GSS1).